The primary structure comprises 205 residues: Small ribosomal subunit protein uS4 (205 aa).

A disordered region spans residues asparagine 18–serine 46. The S4 RNA-binding domain occupies serine 94–glutamate 155.

It belongs to the universal ribosomal protein uS4 family. As to quaternary structure, part of the 30S ribosomal subunit. Contacts protein S5. The interaction surface between S4 and S5 is involved in control of translational fidelity.

In terms of biological role, one of the primary rRNA binding proteins, it binds directly to 16S rRNA where it nucleates assembly of the body of the 30S subunit. Its function is as follows. With S5 and S12 plays an important role in translational accuracy. The polypeptide is Small ribosomal subunit protein uS4 (Phenylobacterium zucineum (strain HLK1)).